A 429-amino-acid chain; its full sequence is Glutamyl-tRNA reductase (429 aa).

Substrate is bound by residues 50-53 (TCNR), Ser110, 115-117 (ETQ), and Gln121. Residue Cys51 is the Nucleophile of the active site. 190-195 (GAGEMA) serves as a coordination point for NADP(+).

It belongs to the glutamyl-tRNA reductase family. As to quaternary structure, homodimer.

It catalyses the reaction (S)-4-amino-5-oxopentanoate + tRNA(Glu) + NADP(+) = L-glutamyl-tRNA(Glu) + NADPH + H(+). It functions in the pathway porphyrin-containing compound metabolism; protoporphyrin-IX biosynthesis; 5-aminolevulinate from L-glutamyl-tRNA(Glu): step 1/2. Its function is as follows. Catalyzes the NADPH-dependent reduction of glutamyl-tRNA(Glu) to glutamate 1-semialdehyde (GSA). This Campylobacter hominis (strain ATCC BAA-381 / DSM 21671 / CCUG 45161 / LMG 19568 / NCTC 13146 / CH001A) protein is Glutamyl-tRNA reductase.